The following is a 393-amino-acid chain: 4-hydroxyphenylpyruvate dioxygenase (393 aa).

Threonine 2 carries the N-acetylthreonine modification. VOC domains are found at residues 18–149 and 180–338; these read HFHS…LVEK and MIDH…IFTK. Lysine 132 bears the N6-succinyllysine mark. Residue histidine 183 coordinates Fe cation. Phosphoserine occurs at positions 211, 226, and 250. Fe cation contacts are provided by histidine 266 and glutamate 349.

The protein belongs to the 4HPPD family. Homodimer. Fe cation is required as a cofactor.

Its subcellular location is the cytoplasm. It localises to the endoplasmic reticulum membrane. The protein resides in the golgi apparatus membrane. It catalyses the reaction 3-(4-hydroxyphenyl)pyruvate + O2 = homogentisate + CO2. Its pathway is amino-acid degradation; L-phenylalanine degradation; acetoacetate and fumarate from L-phenylalanine: step 3/6. Catalyzes the conversion of 4-hydroxyphenylpyruvic acid to homogentisic acid, one of the steps in tyrosine catabolism. The polypeptide is 4-hydroxyphenylpyruvate dioxygenase (HPD) (Homo sapiens (Human)).